The primary structure comprises 865 residues: Serine/threonine-protein kinase greatwall (865 aa).

Met-1 is modified (N-acetylmethionine). The region spanning 34-821 (FTIVKPISRG…MRELKQHPLF (788 aa)) is the Protein kinase domain. ATP-binding positions include 40–48 (ISRGAFGKV) and Lys-61. The active-site Proton acceptor is Asp-155. Phosphothreonine occurs at positions 206 and 221. A phosphoserine mark is found at Ser-362 and Ser-442. Thr-508 carries the post-translational modification Phosphothreonine. Phosphoserine is present on residues Ser-545, Ser-619, Ser-644, and Ser-655. Phosphothreonine is present on Thr-708. Ser-711 bears the Phosphoserine mark. Residue Thr-727 is modified to Phosphothreonine; by CDK1. The AGC-kinase C-terminal domain maps to 822 to 865 (SEVDWENLQHQTMPFVPQPDDETDTSYFEARNNAQHLTISGFSL). Residues Ser-861 and Ser-864 each carry the phosphoserine modification.

Belongs to the protein kinase superfamily. AGC Ser/Thr protein kinase family. Post-translationally, phosphorylation at Thr-727 by CDK1 during M phase activates its kinase activity. Maximum phosphorylation occurs in prometaphase.

The protein resides in the cytoplasm. It is found in the cytoskeleton. The protein localises to the microtubule organizing center. It localises to the centrosome. Its subcellular location is the nucleus. It carries out the reaction L-seryl-[protein] + ATP = O-phospho-L-seryl-[protein] + ADP + H(+). The catalysed reaction is L-threonyl-[protein] + ATP = O-phospho-L-threonyl-[protein] + ADP + H(+). Serine/threonine kinase that plays a key role in M phase by acting as a regulator of mitosis entry and maintenance. Acts by promoting the inactivation of protein phosphatase 2A (PP2A) during M phase: does not directly inhibit PP2A but acts by mediating phosphorylation and subsequent activation of ARPP19 and ENSA at 'Ser-62' and 'Ser-67', respectively. ARPP19 and ENSA are phosphatase inhibitors that specifically inhibit the PPP2R2D (PR55-delta) subunit of PP2A. Inactivation of PP2A during M phase is essential to keep cyclin-B1-CDK1 activity high. Following DNA damage, it is also involved in checkpoint recovery by being inhibited. The polypeptide is Serine/threonine-protein kinase greatwall (Mastl) (Mus musculus (Mouse)).